Consider the following 123-residue polypeptide: Ribonuclease P protein component (123 aa).

Belongs to the RnpA family. In terms of assembly, consists of a catalytic RNA component (M1 or rnpB) and a protein subunit.

The catalysed reaction is Endonucleolytic cleavage of RNA, removing 5'-extranucleotides from tRNA precursor.. RNaseP catalyzes the removal of the 5'-leader sequence from pre-tRNA to produce the mature 5'-terminus. It can also cleave other RNA substrates such as 4.5S RNA. The protein component plays an auxiliary but essential role in vivo by binding to the 5'-leader sequence and broadening the substrate specificity of the ribozyme. This chain is Ribonuclease P protein component, found in Herpetosiphon aurantiacus (strain ATCC 23779 / DSM 785 / 114-95).